Here is a 1268-residue protein sequence, read N- to C-terminus: SR-related and CTD-associated factor 8 (1268 aa).

The region spanning 1-139 (MEAVKTFNSE…PLLDMAAGIP (139 aa)) is the CID domain. Threonine 6 is modified (phosphothreonine). Lysine 18 is covalently cross-linked (Glycyl lysine isopeptide (Lys-Gly) (interchain with G-Cter in SUMO1)). Residues 270 to 283 (GEDSEHSEESKKEM) are compositionally biased toward basic and acidic residues. Disordered regions lie at residues 270 to 290 (GEDS…QLSH), 322 to 355 (QQQP…QQHF), and 385 to 469 (EIFE…PVRS). Serine 273 bears the Phosphoserine mark. Polar residues predominate over residues 327-354 (KVTPQDSQEGTFGSEHSASPSQGSSQQH). A compositionally biased stretch (basic residues) spans 394–443 (VAVRSRSRTHSRSRSRSPRKRRSRSRSGSRKRKHRKRSRSHSREKKRKAS). A compositionally biased stretch (basic and acidic residues) spans 447 to 461 (SSERRAREREKERQK). The 75-residue stretch at 477–551 (TTLWVGQVDK…KVIKIAWALN (75 aa)) folds into the RRM domain. A Phosphoserine modification is found at serine 617. A disordered region spans residues 776–807 (QIPSGENTRPVIPSDIPSSAAMLAQPPGASST). An asymmetric dimethylarginine mark is found at arginine 915, arginine 925, and arginine 936. 2 disordered regions span residues 984–1012 (PGRP…EGDR) and 1040–1065 (RLDP…PVDM). An Asymmetric dimethylarginine modification is found at arginine 1071. The disordered stretch occupies residues 1199 to 1268 (ATSQRKGDNV…VVESTETEGT (70 aa)). Positions 1249–1262 (GTVAGVESEAVVES) are enriched in low complexity.

In terms of assembly, interacts with POLR2A; via C-terminal heptapeptide repeat domain (CTD) phosphorylated at 'Ser-2' and 'Ser-5'. Identified in a complex with CDC5L and other spliceosomal proteins.

The protein resides in the nucleus. The protein localises to the nucleus matrix. Functionally, anti-terminator protein required to prevent early mRNA termination during transcription. Together with SCAF4, acts by suppressing the use of early, alternative poly(A) sites, thereby preventing the accumulation of non-functional truncated proteins. Mechanistically, associates with the phosphorylated C-terminal heptapeptide repeat domain (CTD) of the largest RNA polymerase II subunit (POLR2A), and subsequently binds nascent RNA upstream of early polyadenylation sites to prevent premature mRNA transcript cleavage and polyadenylation. Independently of SCAF4, also acts as a positive regulator of transcript elongation. The chain is SR-related and CTD-associated factor 8 from Mus musculus (Mouse).